Consider the following 75-residue polypeptide: Cytoplasmic envelopment protein 3 (75 aa).

The N-myristoyl glycine; by host moiety is linked to residue Gly2. Positions 53-65 (EGLEYDEDSENDE) are enriched in acidic residues. Residues 53-75 (EGLEYDEDSENDELLFLPNKKPN) form a disordered region.

Belongs to the herpesviridae cytoplasmic envelopment protein 3 family. As to quaternary structure, interacts with BGLF2; this interaction is essential for the proper localization of each protein to the assembly complex and thus for the production of infectious virus. Myristoylation and palmitoylation (probably on one or more of the nearby cysteines at the N-terminus) enable membrane-binding and Golgi apparatus-specific targeting and are essential for efficient packaging. Post-translationally, phosphorylated. Phosphorylation does not seem to be required for recycling to the host Golgi apparatus. Packaging is selective for underphosphorylated forms.

The protein localises to the virion tegument. The protein resides in the virion membrane. It localises to the host cell membrane. Its subcellular location is the host Golgi apparatus membrane. Plays an important role in the cytoplasmic envelopment of tegument proteins and capsids during the assembly and egress processes. Also participates in viral entry at the fusion step probably by regulating the core fusion machinery. This is Cytoplasmic envelopment protein 3 from Homo sapiens (Human).